A 715-amino-acid polypeptide reads, in one-letter code: Probable serine/threonine-protein kinase mkcE (715 aa).

Disordered regions lie at residues 1–125 (MQKI…SQHQ), 228–330 (QLQQ…TTTT), and 366–385 (GVDN…PIQP). The span at 42-53 (YDGGGSGSGSGG) shows a compositional bias: gly residues. 2 stretches are compositionally biased toward low complexity: residues 54 to 70 (SSSN…TGGN) and 80 to 125 (SPSN…SQHQ). The stretch at 207–241 (TGKKNFQQQQLQQLQQQQQQQQLQQQQHQQHNHQI) forms a coiled coil. Low complexity predominate over residues 367 to 378 (VDNLSSTTTSLS). The Protein kinase domain occupies 427-683 (RIGENAEVKG…PTQLLQHPFI (257 aa)). ATP is bound by residues 433-441 (EVKGAFGTV) and Lys-459. Catalysis depends on Asp-550, which acts as the Proton acceptor.

Belongs to the protein kinase superfamily. STE Ser/Thr protein kinase family. STE20 subfamily. Mg(2+) is required as a cofactor.

The enzyme catalyses L-seryl-[protein] + ATP = O-phospho-L-seryl-[protein] + ADP + H(+). The catalysed reaction is L-threonyl-[protein] + ATP = O-phospho-L-threonyl-[protein] + ADP + H(+). The chain is Probable serine/threonine-protein kinase mkcE from Dictyostelium discoideum (Social amoeba).